The chain runs to 156 residues: MSRRHAAEKREVLPDAKYGDRVLTKFMNNLMIDGKKSVAERIVYNALDRVQGKLKREPIEVFHEALDNVKPSVEVRSRRVGGATYQVPVEVRPSRREALAIRWLIDASKKRNEHTMEERLAGELADAVNGRGTAVKKREDTHKMADANKAFSHYRW.

This sequence belongs to the universal ribosomal protein uS7 family. In terms of assembly, part of the 30S ribosomal subunit. Contacts proteins S9 and S11.

One of the primary rRNA binding proteins, it binds directly to 16S rRNA where it nucleates assembly of the head domain of the 30S subunit. Is located at the subunit interface close to the decoding center, probably blocks exit of the E-site tRNA. The sequence is that of Small ribosomal subunit protein uS7 from Paracoccus denitrificans (strain Pd 1222).